A 154-amino-acid polypeptide reads, in one-letter code: Crossover junction endodeoxyribonuclease RuvC (154 aa).

Residues D7, E67, and D139 contribute to the active site. Mg(2+) contacts are provided by D7, E67, and D139.

Belongs to the RuvC family. In terms of assembly, homodimer which binds Holliday junction (HJ) DNA. The HJ becomes 2-fold symmetrical on binding to RuvC with unstacked arms; it has a different conformation from HJ DNA in complex with RuvA. In the full resolvosome a probable DNA-RuvA(4)-RuvB(12)-RuvC(2) complex forms which resolves the HJ. Mg(2+) is required as a cofactor.

The protein resides in the cytoplasm. It catalyses the reaction Endonucleolytic cleavage at a junction such as a reciprocal single-stranded crossover between two homologous DNA duplexes (Holliday junction).. In terms of biological role, the RuvA-RuvB-RuvC complex processes Holliday junction (HJ) DNA during genetic recombination and DNA repair. Endonuclease that resolves HJ intermediates. Cleaves cruciform DNA by making single-stranded nicks across the HJ at symmetrical positions within the homologous arms, yielding a 5'-phosphate and a 3'-hydroxyl group; requires a central core of homology in the junction. The consensus cleavage sequence is 5'-(A/T)TT(C/G)-3'. Cleavage occurs on the 3'-side of the TT dinucleotide at the point of strand exchange. HJ branch migration catalyzed by RuvA-RuvB allows RuvC to scan DNA until it finds its consensus sequence, where it cleaves and resolves the cruciform DNA. The sequence is that of Crossover junction endodeoxyribonuclease RuvC from Synechococcus sp. (strain CC9605).